The chain runs to 56 residues: Small ribosomal subunit protein uS14 (56 aa).

4 residues coordinate Zn(2+): Cys21, Cys24, Cys39, and Cys42.

This sequence belongs to the universal ribosomal protein uS14 family. Component of the 40S small ribosomal subunit. Requires Zn(2+) as cofactor.

The protein localises to the cytoplasm. Its subcellular location is the cytosol. It is found in the rough endoplasmic reticulum. The protein is Small ribosomal subunit protein uS14 (RpS29) of Plutella xylostella (Diamondback moth).